The chain runs to 108 residues: MDDMLIVTTNEVAGYRIVEVYGEVFGLTTRSRNLFSSAGQQMKTVVGGEINGYTKLQHDTRETSIGRMKEEAKAKGANAIVAMRFDSSTFQNIDSVAAYGTAVKIEKI.

The protein belongs to the UPF0145 family.

This chain is UPF0145 protein LACR_1006, found in Lactococcus lactis subsp. cremoris (strain SK11).